The following is a 338-amino-acid chain: MSTLRLLLSDSYDPWFNLAVEECIFRQMPATQRVLFLWRNADTVVIGRAQNPWKECNTRRMEEDHVRLARRSSGGGAVFHDLGNTCFTFMAGKPEYDKTVSTAIVLAALNSLGVTAEASGRNDLVVKTDSGDRKVSGSAYRETIDRGFHHGTLLLNADLSRLANYLNPDQKKLQAKGITSVRGRVANLVELLPGITHQHICEAIQEAFFSHYGERVDAEVISPDNTPDLPNFAETFARQSSWEWNFGQAPAFSHLLDERFRWGGVELHFDVEKGHITRTQAFTDSLNPAPLEALAARLVGCQYRAEVLLQQCEALVGDFPEQEAELKELSAWMAGAVR.

The BPL/LPL catalytic domain maps to 29-216; the sequence is PATQRVLFLW…AFFSHYGERV (188 aa). ATP is bound by residues Arg71, 76 to 79, and Lys134; that span reads GAVF. Residue Lys134 participates in (R)-lipoate binding.

Belongs to the LplA family. Monomer.

It is found in the cytoplasm. The enzyme catalyses L-lysyl-[lipoyl-carrier protein] + (R)-lipoate + ATP = N(6)-[(R)-lipoyl]-L-lysyl-[lipoyl-carrier protein] + AMP + diphosphate + H(+). It functions in the pathway protein modification; protein lipoylation via exogenous pathway; protein N(6)-(lipoyl)lysine from lipoate: step 1/2. It participates in protein modification; protein lipoylation via exogenous pathway; protein N(6)-(lipoyl)lysine from lipoate: step 2/2. Its function is as follows. Catalyzes both the ATP-dependent activation of exogenously supplied lipoate to lipoyl-AMP and the transfer of the activated lipoyl onto the lipoyl domains of lipoate-dependent enzymes. This chain is Lipoate-protein ligase A, found in Klebsiella pneumoniae (strain 342).